Reading from the N-terminus, the 353-residue chain is Cytochrome bc1 complex Rieske iron-sulfur subunit (353 aa).

The disordered stretch occupies residues M1–A51. Positions H40 to A51 are enriched in basic and acidic residues. Transmembrane regions (helical) follow at residues A60–I80, F99–W119, and L164–L184. The Rieske domain maps to K246 to E336. [2Fe-2S] cluster-binding residues include C279, H281, C298, and H301. An intrachain disulfide couples C284 to C300.

Belongs to the Rieske iron-sulfur protein family. The cytochrome bc1 complex is composed of a cytochrome b (QcrB), the Rieske iron-sulfur protein (QcrA) and a diheme cytochrome c (QcrC) subunit. The cofactor is [2Fe-2S] cluster.

The protein resides in the cell membrane. In terms of biological role, iron-sulfur subunit of the cytochrome bc1 complex, an essential component of the respiratory electron transport chain required for ATP synthesis. The bc1 complex catalyzes the oxidation of menaquinol and the reduction of cytochrome c in the respiratory chain. The bc1 complex operates through a Q-cycle mechanism that couples electron transfer to generation of the proton gradient that drives ATP synthesis. This chain is Cytochrome bc1 complex Rieske iron-sulfur subunit (qcrA), found in Streptomyces coelicolor (strain ATCC BAA-471 / A3(2) / M145).